The sequence spans 154 residues: MITLYEAAIKTLITHRKQILKHPDSREILLALGLYWDKTHILVKCRECGKMSLTGKHSTKCININCLLILAIKKKNKRMVDTLIRMGADVTYIHLLKNKIKLSYNQLSMLKSNSQISLKELHAICYLLYGRLPKKIKQGMQLCKTMAGLCGELL.

Belongs to the asfivirus MGF 300 family.

Plays a role in virus cell tropism, and may be required for efficient virus replication in macrophages. The sequence is that of Protein MGF 300-2R from Ornithodoros (relapsing fever ticks).